Consider the following 262-residue polypeptide: Probable aminoglycoside 3'-phosphotransferase (262 aa).

Residue D187 is the Proton acceptor of the active site.

The protein belongs to the aminoglycoside phosphotransferase family.

The catalysed reaction is kanamycin A + ATP = kanamycin 3'-phosphate + ADP + H(+). This is Probable aminoglycoside 3'-phosphotransferase (ymdC) from Lactococcus lactis subsp. lactis (strain IL1403) (Streptococcus lactis).